Here is a 22-residue protein sequence, read N- to C-terminus: Mu-conotoxin SxIIIC (22 aa).

Disulfide bonds link cysteine 3/cysteine 15, cysteine 4/cysteine 21, and cysteine 10/cysteine 22. Position 22 is a cysteine amide (cysteine 22).

The protein belongs to the conotoxin M superfamily. In terms of tissue distribution, expressed by the venom duct.

It localises to the secreted. Functionally, mu-conotoxins block voltage-gated sodium channels (Nav). This toxin potently inhibits hNav1.4/SCN4A (IC(50)=15.11 nM). It also displays lower activities on other human subtypes (Nav1.1/SCN1A; IC(50)=132 nM, Nav1.2/SCN2A; IC(50)=363.8, Nav1.3/SCN3A; IC(50)=89.4, Nav1.6/SCN3A; IC(50)=124.9, Nav1.7/SCN7A; IC(50)=152.2). At Nav1.7/SCN9A, it does not elicit change in channel voltage-dependence of fast inactivation or activation, suggesting it acts as a pore blocker. Interestingly, it blocks current inhibition in an irreversible manner (tested during 35 minutes). The chain is Mu-conotoxin SxIIIC from Conus striolatus (Cone snail).